Reading from the N-terminus, the 93-residue chain is Small hydrophobic protein (93 aa).

2 consecutive transmembrane segments (helical) span residues 5–25 and 32–52; these read LIIIGAAFLVGPRTFKFVLAY and AFGPPLQIVQFMVWLIIIYFP.

It is found in the membrane. The chain is Small hydrophobic protein from Tupaia virus (isolate Tupaia/Thailand/-/1986) (TUPV).